The sequence spans 475 residues: Bifunctional protein HldE (475 aa).

The segment at 1–318 is ribokinase; it reads MKVTLPDFER…ENAVRGRAET (318 aa). ATP is bound at residue 195–198; it reads NLSE. Asp-264 is an active-site residue. The segment at 344-475 is cytidylyltransferase; sequence MTNGVFDILH…NIIKKIQKNS (132 aa).

The protein in the N-terminal section; belongs to the carbohydrate kinase PfkB family. It in the C-terminal section; belongs to the cytidylyltransferase family. Homodimer.

The catalysed reaction is D-glycero-beta-D-manno-heptose 7-phosphate + ATP = D-glycero-beta-D-manno-heptose 1,7-bisphosphate + ADP + H(+). The enzyme catalyses D-glycero-beta-D-manno-heptose 1-phosphate + ATP + H(+) = ADP-D-glycero-beta-D-manno-heptose + diphosphate. Its pathway is nucleotide-sugar biosynthesis; ADP-L-glycero-beta-D-manno-heptose biosynthesis; ADP-L-glycero-beta-D-manno-heptose from D-glycero-beta-D-manno-heptose 7-phosphate: step 1/4. It functions in the pathway nucleotide-sugar biosynthesis; ADP-L-glycero-beta-D-manno-heptose biosynthesis; ADP-L-glycero-beta-D-manno-heptose from D-glycero-beta-D-manno-heptose 7-phosphate: step 3/4. Functionally, catalyzes the phosphorylation of D-glycero-D-manno-heptose 7-phosphate at the C-1 position to selectively form D-glycero-beta-D-manno-heptose-1,7-bisphosphate. Its function is as follows. Catalyzes the ADP transfer from ATP to D-glycero-beta-D-manno-heptose 1-phosphate, yielding ADP-D-glycero-beta-D-manno-heptose. This Cronobacter sakazakii (strain ATCC BAA-894) (Enterobacter sakazakii) protein is Bifunctional protein HldE.